A 496-amino-acid polypeptide reads, in one-letter code: Probable cytosol aminopeptidase (496 aa).

Lys-261 and Asp-266 together coordinate Mn(2+). The active site involves Lys-273. Asp-284, Asp-343, and Glu-345 together coordinate Mn(2+). Arg-347 is a catalytic residue.

The protein belongs to the peptidase M17 family. Mn(2+) is required as a cofactor.

The protein localises to the cytoplasm. It carries out the reaction Release of an N-terminal amino acid, Xaa-|-Yaa-, in which Xaa is preferably Leu, but may be other amino acids including Pro although not Arg or Lys, and Yaa may be Pro. Amino acid amides and methyl esters are also readily hydrolyzed, but rates on arylamides are exceedingly low.. The enzyme catalyses Release of an N-terminal amino acid, preferentially leucine, but not glutamic or aspartic acids.. Presumably involved in the processing and regular turnover of intracellular proteins. Catalyzes the removal of unsubstituted N-terminal amino acids from various peptides. The polypeptide is Probable cytosol aminopeptidase (Bacillus licheniformis (strain ATCC 14580 / DSM 13 / JCM 2505 / CCUG 7422 / NBRC 12200 / NCIMB 9375 / NCTC 10341 / NRRL NRS-1264 / Gibson 46)).